Reading from the N-terminus, the 326-residue chain is DNA-binding death effector domain-containing protein 2 (326 aa).

A DED domain is found at 25 to 104 (SLHRMFEVVG…RHDLLPHLAR (80 aa)). Positions 104-109 (RKRRRP) match the Nuclear localization signal motif. The segment at 104-194 (RKRRRPVSPE…PARPSSEGKV (91 aa)) is disordered. Positions 136 to 146 (SSSSANSQQGQ) are enriched in low complexity. Residues 155 to 173 (KRQRRSRGRPSGGARRRRR) carry the Bipartite nuclear localization signal motif. Over residues 155–174 (KRQRRSRGRPSGGARRRRRG) the composition is skewed to basic residues. Residues 175–191 (APAAPQQQSEPARPSSE) are compositionally biased toward low complexity.

As to quaternary structure, interacts with CASP8, CASP10 and GTF3C3. Homodimerizes and heterodimerizes with DEDD. Expressed in most tissues. High levels were found in liver, kidney, heart, ovary, spleen, testes, skeletal muscle and peripheral blood leukocytes. Expression was absent or low in colon and small intestine. Expression is relatively high in the tumor cell lines chronic myologenous leukemia K-562 and the colorectal adenocarcinoma SW480. Expression is moderate in the cervical carcinoma HeLa, the Burkitt's lymphoma Raji, the lung carcinoma A-549, and the melanoma G-361. In contrast, two leukemia cell lines, HL-60 (promyelocytic leukemia) and MOLT-4 (lymphoblastic leukemia), show relatively low levels.

It localises to the nucleus. The protein resides in the nucleolus. Its function is as follows. May play a critical role in death receptor-induced apoptosis and may target CASP8 and CASP10 to the nucleus. May regulate degradation of intermediate filaments during apoptosis. May play a role in the general transcription machinery in the nucleus and might be an important regulator of the activity of GTF3C3. In Homo sapiens (Human), this protein is DNA-binding death effector domain-containing protein 2 (DEDD2).